We begin with the raw amino-acid sequence, 366 residues long: Histidinol-phosphate aminotransferase 2 (366 aa).

Over residues 1–11 (MQVKDQLSSLQ) the composition is skewed to polar residues. The disordered stretch occupies residues 1 to 21 (MQVKDQLSSLQPYKPGKSPEQ). K222 is modified (N6-(pyridoxal phosphate)lysine).

The protein belongs to the class-II pyridoxal-phosphate-dependent aminotransferase family. Histidinol-phosphate aminotransferase subfamily. In terms of assembly, homodimer. Pyridoxal 5'-phosphate is required as a cofactor.

It catalyses the reaction L-histidinol phosphate + 2-oxoglutarate = 3-(imidazol-4-yl)-2-oxopropyl phosphate + L-glutamate. Its pathway is amino-acid biosynthesis; L-histidine biosynthesis; L-histidine from 5-phospho-alpha-D-ribose 1-diphosphate: step 7/9. The sequence is that of Histidinol-phosphate aminotransferase 2 (hisC2) from Bacillus anthracis.